A 747-amino-acid polypeptide reads, in one-letter code: Sushi domain-containing protein 1 (747 aa).

A signal peptide spans 1-29; it reads MGRGPWDAGPSRRLLPLLLLLGLARGAAG. Residues 30–721 are Extracellular-facing; the sequence is APGPDGLDVC…WAQVKDSSLM (692 aa). In terms of domain architecture, EGF-like 1 spans 35–72; that stretch reads GLDVCATCHEHATCQQREGKKICICNYGFVGNGRTQCV. 5 disulfides stabilise this stretch: C39–C48, C42–C57, C59–C71, C77–C91, and C85–C100. In terms of domain architecture, EGF-like 2; calcium-binding spans 73–112; the sequence is DKNECQFGATLVCGNHTSCHNTPGGFYCICLEGYRATNNN. N-linked (GlcNAc...) asparagine glycosylation is found at N87 and N112. In terms of domain architecture, EGF-like 3; calcium-binding spans 125–162; that stretch reads DIDECEVSGLCRHGGRCVNTHGSFECYCMDGYLPRNGP. Intrachain disulfides connect C129/C141, C135/C150, C179/C221, C206/C234, C239/C281, and C266/C294. Sushi domains lie at 177-236 and 237-296; these read IDCG…HCQE and INCG…TCTE. Residue N193 is glycosylated (N-linked (GlcNAc...) asparagine). N-linked (GlcNAc...) asparagine glycosylation is present at N253. N-linked (GlcNAc...) asparagine glycans are attached at residues N348, N367, and N563. The chain crosses the membrane as a helical span at residues 722 to 742; it reads LLQMAGVGLGSLAVVIILTFL. Residues 743–747 are Cytoplasmic-facing; that stretch reads SFSAV.

The protein localises to the membrane. This chain is Sushi domain-containing protein 1 (SUSD1), found in Homo sapiens (Human).